A 410-amino-acid polypeptide reads, in one-letter code: F-box protein At3g61340 (410 aa).

The 50-residue stretch at 17–66 (EEKSERIPFDLVIEILLRLPVKSIARFRYVSKLWQSTLRGQHFTESYLTI) folds into the F-box domain.

The chain is F-box protein At3g61340 from Arabidopsis thaliana (Mouse-ear cress).